A 173-amino-acid chain; its full sequence is Pyrimidine operon regulatory protein (173 aa).

Residues 40-41 (TR), 97-105 (DDVLYTGRT), and Arg130 each bind substrate. Residues 93 to 105 (VILVDDVLYTGRT) carry the PRPP-binding motif.

It belongs to the purine/pyrimidine phosphoribosyltransferase family. PyrR subfamily.

Its function is as follows. Regulates transcriptional attenuation of the pyrimidine nucleotide (pyr) operon in response to exogenous pyrimidines, probably by binding to specific sites on pyr mRNA. This probably disrupts an antiterminator hairpin in the RNA and favors formation of a downstream transcription terminator, leading to a reduced expression of downstream genes. The sequence is that of Pyrimidine operon regulatory protein from Lactococcus lactis subsp. lactis (strain IL1403) (Streptococcus lactis).